Here is a 343-residue protein sequence, read N- to C-terminus: tRNA N6-adenosine threonylcarbamoyltransferase (343 aa).

Fe cation is bound by residues His111 and His115. Substrate-binding positions include 134-138 (LVSGG), Asp167, Gly180, and Asn276. Position 304 (Asp304) interacts with Fe cation.

It belongs to the KAE1 / TsaD family. The cofactor is Fe(2+).

The protein localises to the cytoplasm. It carries out the reaction L-threonylcarbamoyladenylate + adenosine(37) in tRNA = N(6)-L-threonylcarbamoyladenosine(37) in tRNA + AMP + H(+). In terms of biological role, required for the formation of a threonylcarbamoyl group on adenosine at position 37 (t(6)A37) in tRNAs that read codons beginning with adenine. Is involved in the transfer of the threonylcarbamoyl moiety of threonylcarbamoyl-AMP (TC-AMP) to the N6 group of A37, together with TsaE and TsaB. TsaD likely plays a direct catalytic role in this reaction. The sequence is that of tRNA N6-adenosine threonylcarbamoyltransferase from Chromohalobacter salexigens (strain ATCC BAA-138 / DSM 3043 / CIP 106854 / NCIMB 13768 / 1H11).